The chain runs to 34 residues: Photosystem II reaction center protein M (34 aa).

The helical transmembrane segment at 5–25 threads the bilayer; sequence ILAFIATALFILIPTAFLLII.

This sequence belongs to the PsbM family. As to quaternary structure, PSII is composed of 1 copy each of membrane proteins PsbA, PsbB, PsbC, PsbD, PsbE, PsbF, PsbH, PsbI, PsbJ, PsbK, PsbL, PsbM, PsbT, PsbX, PsbY, PsbZ, Psb30/Ycf12, at least 3 peripheral proteins of the oxygen-evolving complex and a large number of cofactors. It forms dimeric complexes.

It localises to the plastid. The protein resides in the chloroplast thylakoid membrane. Its function is as follows. One of the components of the core complex of photosystem II (PSII). PSII is a light-driven water:plastoquinone oxidoreductase that uses light energy to abstract electrons from H(2)O, generating O(2) and a proton gradient subsequently used for ATP formation. It consists of a core antenna complex that captures photons, and an electron transfer chain that converts photonic excitation into a charge separation. This subunit is found at the monomer-monomer interface. In Lolium perenne (Perennial ryegrass), this protein is Photosystem II reaction center protein M.